Reading from the N-terminus, the 573-residue chain is Probable D-xylulose kinase A (573 aa).

Positions 97, 168, 284, and 285 each coordinate substrate. ATP contacts are provided by residues Trp-366, 471-472 (GG), and Asn-475.

Belongs to the FGGY kinase family.

It is found in the cytoplasm. The enzyme catalyses D-xylulose + ATP = D-xylulose 5-phosphate + ADP + H(+). In terms of biological role, highly specific D-xylulose kinase which participates in the catabolism of xylose. Xylose is a major component of hemicelluloses such as xylan. Most fungi utilize D-xylose via three enzymatic reactions, xylose reductase (XR), xylitol dehydrogenase (XDH), and xylulokinase, to form xylulose 5-phosphate, which enters pentose phosphate pathway. The chain is Probable D-xylulose kinase A (xkiA) from Aspergillus fumigatus (strain ATCC MYA-4609 / CBS 101355 / FGSC A1100 / Af293) (Neosartorya fumigata).